The sequence spans 235 residues: Voltage-gated hydrogen channel 1 (235 aa).

Topologically, residues methionine 1–arginine 65 are cytoplasmic. Residues phenylalanine 66–leucine 86 form a helical membrane-spanning segment. Residues isoleucine 87 to valine 103 are Extracellular-facing. Residues phenylalanine 104–tyrosine 126 traverse the membrane as a helical segment. The Cytoplasmic segment spans residues arginine 127–lysine 134. Residues phenylalanine 135 to serine 155 traverse the membrane as a helical segment. Residues lysine 156–alanine 162 are Extracellular-facing. The helical transmembrane segment at methionine 163–valine 183 threads the bilayer. At serine 184 to phenylalanine 235 the chain is on the cytoplasmic side. Residues asparagine 187 to histidine 231 are a coiled coil.

The protein belongs to the hydrogen channel family. Homodimer.

It localises to the membrane. It is found in the cell membrane. Mediates the voltage-dependent proton permeability of excitable membranes. Forms a proton-selective channel through which protons may pass in accordance with their electrochemical gradient. The sequence is that of Voltage-gated hydrogen channel 1 (hvcn1) from Danio rerio (Zebrafish).